Reading from the N-terminus, the 635-residue chain is Threonine--tRNA ligase (635 aa).

The region spanning 1-62 is the TGS domain; the sequence is MITITLPDGS…EHDAILRIIT (62 aa). The segment at 244-535 is catalytic; that stretch reads DHRKIGKAQD…LIEHYAGIWP (292 aa). 3 residues coordinate Zn(2+): Cys-335, His-386, and His-512.

The protein belongs to the class-II aminoacyl-tRNA synthetase family. Homodimer. It depends on Zn(2+) as a cofactor.

It localises to the cytoplasm. The enzyme catalyses tRNA(Thr) + L-threonine + ATP = L-threonyl-tRNA(Thr) + AMP + diphosphate + H(+). Functionally, catalyzes the attachment of threonine to tRNA(Thr) in a two-step reaction: L-threonine is first activated by ATP to form Thr-AMP and then transferred to the acceptor end of tRNA(Thr). Also edits incorrectly charged L-seryl-tRNA(Thr). The polypeptide is Threonine--tRNA ligase (Xylella fastidiosa (strain M12)).